The primary structure comprises 129 residues: uncharacterized protein (129 aa).

Residues 77-97 (ILAVFIISFIIVVVGVLLLGL) traverse the membrane as a helical segment. The interval 109 to 129 (SSNDKKLQSNDEEKQALAEKA) is disordered. The segment covering 111–129 (NDKKLQSNDEEKQALAEKA) has biased composition (basic and acidic residues).

Its subcellular location is the vacuole membrane. This is an uncharacterized protein from Saccharomyces cerevisiae (strain ATCC 204508 / S288c) (Baker's yeast).